A 478-amino-acid chain; its full sequence is PTS system mannitol-specific EIICB component (478 aa).

Topologically, residues 1 to 29 are cytoplasmic; that stretch reads MQQQEQQQGGMKVKVQRFGSYLSGMIMPN. The PTS EIIC type-2 domain occupies 18–347; sequence FGSYLSGMIM…VILKSSKASE (330 aa). A helical membrane pass occupies residues 30–51; it reads IGAFIAWGIITALFIPAGWFPN. The Extracellular portion of the chain corresponds to 52–55; sequence EQLN. A helical transmembrane segment spans residues 56–76; the sequence is TLVSPMITYLLPLLIAYTGGK. Residues 77 to 139 are Cytoplasmic-facing; the sequence is MIYDHRGGVV…QGFEMLINNF (63 aa). A helical transmembrane segment spans residues 140-161; it reads TAGIVGAALTILAFYAIGPVVL. Over 162–170 the chain is Extracellular; that stretch reads TLNKLLAAG. A helical membrane pass occupies residues 171-191; that stretch reads VEVIVHANLLPVASVFVEPAK. Topologically, residues 192–278 are cytoplasmic; it reads VLFLNNAINH…ILMKPALILA (87 aa). A helical transmembrane segment spans residues 279–298; sequence AIAGGASGLLTFTIFNAGLV. Over 299–318 the chain is Extracellular; the sequence is AAASPGSIIALMAMTPRGGY. Residues 319–340 traverse the membrane as a helical segment; the sequence is FGVLAGVLVAAAVSFIVSAVIL. Residues 341–478 are Cytoplasmic-facing; sequence KSSKASEEDL…YDELIEKLKK (138 aa). Residues 390–478 enclose the PTS EIIB type-2 domain; sequence NKIIFACDAG…YDELIEKLKK (89 aa). Cysteine 396 (phosphocysteine intermediate; for EIIB activity) is an active-site residue. A Phosphocysteine; by EIIA modification is found at cysteine 396.

As to quaternary structure, homodimer.

It localises to the cell membrane. The catalysed reaction is D-mannitol(out) + N(pros)-phospho-L-histidyl-[protein] = D-mannitol 1-phosphate(in) + L-histidyl-[protein]. The phosphoenolpyruvate-dependent sugar phosphotransferase system (sugar PTS), a major carbohydrate active transport system, catalyzes the phosphorylation of incoming sugar substrates concomitantly with their translocation across the cell membrane. The enzyme II CmtAB PTS system is involved in D-mannitol transport. This chain is PTS system mannitol-specific EIICB component, found in Bacillus subtilis (strain 168).